A 903-amino-acid chain; its full sequence is HTH-type transcriptional regulator MalT (903 aa).

39 to 46 serves as a coordination point for ATP; that stretch reads CPAGYGKT. The HTH luxR-type domain maps to 832 to 897; sequence ELIRTSPLTQ…DAVQQAQRLL (66 aa). Positions 856-875 form a DNA-binding region, H-T-H motif; the sequence is NDQIAGELEVAATTIKTHIR.

This sequence belongs to the MalT family. As to quaternary structure, monomer in solution. Oligomerizes to an active state in the presence of the positive effectors ATP and maltotriose.

With respect to regulation, activated by ATP and maltotriose, which are both required for DNA binding. Positively regulates the transcription of the maltose regulon whose gene products are responsible for uptake and catabolism of malto-oligosaccharides. Specifically binds to the promoter region of its target genes, recognizing a short DNA motif called the MalT box. The sequence is that of HTH-type transcriptional regulator MalT from Yersinia enterocolitica serotype O:8 / biotype 1B (strain NCTC 13174 / 8081).